A 288-amino-acid polypeptide reads, in one-letter code: Probable syndecan (288 aa).

The signal sequence occupies residues 1–26 (MILKLNFCLSTYSVLILLSLSTQAFA). The Extracellular portion of the chain corresponds to 27-231 (ANQAKTKVVP…ETLANGFYAA (205 aa)). The disordered stretch occupies residues 67-175 (EVNGSGYPTD…NIHNDEDFFT (109 aa)). The N-linked (GlcNAc...) asparagine glycan is linked to asparagine 69. O-linked (Xyl...) (glycosaminoglycan) serine glycosylation is found at serine 71 and serine 86. Over residues 89–104 (PPSSATTKSDKVTSPS) the composition is skewed to polar residues. Residues 106 to 124 (AVVTAKPTTVPTTTASFKP) are compositionally biased toward low complexity. Acidic residues predominate over residues 141 to 164 (VEEDEDDDEDEDEDDEDDEEDFAD). Residue serine 214 is glycosylated (O-linked (Xyl...) (glycosaminoglycan) serine). Residues 232-252 (IAGGVLVAVITAILLVLFVVF) form a helical membrane-spanning segment. At 253 to 288 (RIRKKDEGSYALDEPKQARPYASYGYTKASTKEFYA) the chain is on the cytoplasmic side.

Belongs to the syndecan proteoglycan family.

The protein resides in the membrane. It is found in the cell surface. Its subcellular location is the cell junction. It localises to the cytoplasm. In terms of biological role, cell surface proteoglycan that bears heparan sulfate. Required for correct mitotic spindle orientation of the ABar blastomere division plane and this may be through modulation of astral microtubule array, and in association with the wnt-signaling proteins mig-5 and dsh-2. Involved in the migration of AQR and PQR neurons, which descend from the Q neuroblasts. Promotes the axon guidance of D-type motor neurons. This chain is Probable syndecan, found in Caenorhabditis elegans.